Consider the following 98-residue polypeptide: MEKHNHYFYVLKCADGSLYAGYTNDLQKRLMTHNSGKGAKYTRARRPVELYYHECFATKREAMQQEYRFKTWTRKKKDLYIEEMRIEKEATHEHTKKL.

Positions 4-79 constitute a GIY-YIG domain; it reads HNHYFYVLKC…KTWTRKKKDL (76 aa).

This sequence belongs to the UPF0213 family.

In Bacillus pumilus (strain SAFR-032), this protein is UPF0213 protein BPUM_0019.